The sequence spans 500 residues: NAD(P)H-quinone oxidoreductase chain 4, chloroplastic (500 aa).

Helical transmembrane passes span Phe-4 to Leu-24, Ile-37 to Leu-57, Leu-80 to Ala-100, Leu-113 to Ser-130, Leu-134 to Met-154, Phe-167 to Leu-187, Ala-208 to Ile-228, His-242 to Val-262, Ala-272 to Ala-292, Ile-305 to Asp-325, Gly-330 to Gly-350, Leu-386 to Thr-406, Ile-416 to Met-436, and Ile-462 to Val-482.

This sequence belongs to the complex I subunit 4 family.

It localises to the plastid. Its subcellular location is the chloroplast thylakoid membrane. It catalyses the reaction a plastoquinone + NADH + (n+1) H(+)(in) = a plastoquinol + NAD(+) + n H(+)(out). The catalysed reaction is a plastoquinone + NADPH + (n+1) H(+)(in) = a plastoquinol + NADP(+) + n H(+)(out). This is NAD(P)H-quinone oxidoreductase chain 4, chloroplastic from Nuphar advena (Common spatterdock).